Reading from the N-terminus, the 98-residue chain is Large ribosomal subunit protein uL23 (98 aa).

This sequence belongs to the universal ribosomal protein uL23 family. Part of the 50S ribosomal subunit. Contacts protein L29, and trigger factor when it is bound to the ribosome.

One of the early assembly proteins it binds 23S rRNA. One of the proteins that surrounds the polypeptide exit tunnel on the outside of the ribosome. Forms the main docking site for trigger factor binding to the ribosome. The sequence is that of Large ribosomal subunit protein uL23 from Frankia alni (strain DSM 45986 / CECT 9034 / ACN14a).